We begin with the raw amino-acid sequence, 297 residues long: PIH1 domain-containing protein 1 (297 aa).

Belongs to the PIH1 family.

It localises to the nucleus. In terms of biological role, involved in the assembly of C/D box small nucleolar ribonucleoprotein (snoRNP) particles. Recruits the SWI/SNF complex to the core promoter of rRNA genes and enhances pre-rRNA transcription. Mediates interaction of TELO2 with the R2TP complex which is necessary for the stability of MTOR and SMG1. Positively regulates the assembly and activity of the mTORC1 complex. The polypeptide is PIH1 domain-containing protein 1 (pih1d1) (Xenopus laevis (African clawed frog)).